A 1482-amino-acid chain; its full sequence is Cystic fibrosis transmembrane conductance regulator (1482 aa).

Over 1–77 (MQRSPLEKAS…KLINALQRCF (77 aa)) the chain is Cytoplasmic. The helical transmembrane segment at 78–98 (FWRFTFYGILLYLGEVTKAIQ) threads the bilayer. The ABC transmembrane type-1 1 domain maps to 81–365 (FTFYGILLYL…WAVQTWYDSL (285 aa)). Residues 99–122 (PLLLGRIIASYDPDNKMERSIAIY) lie on the Extracellular side of the membrane. Residues 123-146 (LGIGLCLLFIMRTLLLHPAIFGLH) form a helical membrane-spanning segment. The Cytoplasmic portion of the chain corresponds to 147–195 (HIGMQMRIALFSLIYKKTLKLSSRVLDKISIGQLVSLLSNNLNKFDEGL). The helical transmembrane segment at 196-216 (ALAHFVWIAPLQVMLLMGLLW) threads the bilayer. The Extracellular segment spans residues 217 to 222 (ELLQAS). Residues 223-243 (AFCGLAFLIVLALLQAGLGRM) traverse the membrane as a helical segment. Residues 244 to 298 (MMKYRDQRAGKINERLVITSEMIENIQSVKAYCWEEAMEKMIENLRQTELRLTRK) lie on the Cytoplasmic side of the membrane. A helical transmembrane segment spans residues 299-319 (AAYVRYVNSSAFFFSGFFVVF). Over 320–339 (LSVLPYALIKGIILRKIFTT) the chain is Extracellular. The helical transmembrane segment at 340-358 (ISFCIVLRMAVTRQFPWAV) threads the bilayer. At 359–859 (QTWYDSLGAI…YLRYITVHKN (501 aa)) the chain is on the cytoplasmic side. ATP-binding positions include Trp-401, 458–465 (GSTGAGKT), and Gln-493. In terms of domain architecture, ABC transporter 1 spans 423 to 646 (SGDNRLFFSN…RPDFSSKLMG (224 aa)). A lipid anchor (S-palmitoyl cysteine) is attached at Cys-524. 2 positions are modified to phosphoserine: Ser-549 and Ser-660. Positions 654 to 832 (SAERRNSILT…EEINEEDLKE (179 aa)) are disordered R region. At Ser-670 the chain carries Phosphoserine; by PKA. Ser-686 is modified (phosphoserine). Lys-688 participates in a covalent cross-link: Glycyl lysine isopeptide (Lys-Gly) (interchain with G-Cter in ubiquitin). Phosphoserine occurs at positions 700 and 712. The residue at position 717 (Thr-717) is a Phosphothreonine. 5 positions are modified to phosphoserine: Ser-737, Ser-768, Ser-791, Ser-796, and Ser-814. Residues 860–880 (LIFVLIWCLVIFLAEVAASLV) form a helical membrane-spanning segment. The ABC transmembrane type-1 2 domain maps to 860 to 1156 (LIFVLIWCLV…AVNSSIDVDS (297 aa)). Residues 881-919 (AFWLIEKTRPQDKGNSTRSTNNTSPVIITSTSAFYMFYI) lie on the Extracellular side of the membrane. N-linked (GlcNAc...) asparagine glycans are attached at residues Asn-895 and Asn-901. The discontinuously helical transmembrane segment at 920–940 (YVGVADSLLALGFLRGLPLVH) threads the bilayer. Topologically, residues 941–991 (TLITVSKILHQKMLHSVLHAPMSTLNTLKAGAILNRFSKDIAILDDLLPLT) are cytoplasmic. A helical membrane pass occupies residues 992 to 1012 (IFDFIQLVLIVIGAVVVVSIL). The Extracellular portion of the chain corresponds to 1013–1014 (KP). The helical transmembrane segment at 1015–1035 (YIFLAAVPVIIAFVILRAYFL) threads the bilayer. At 1036-1096 (QTSQQLKQLE…TATWFLYLST (61 aa)) the chain is on the cytoplasmic side. Residues 1097–1117 (LRWFQMRIEMIFVVFFVAVTF) form a helical membrane-spanning segment. The Extracellular segment spans residues 1118–1131 (ISILTTGEGEGTVG). The chain crosses the membrane as a helical span at residues 1132–1152 (IILTLAMNIMSTLQWAVNSSI). The Cytoplasmic portion of the chain corresponds to 1153 to 1482 (DVDSLMRSVS…AEEEVQDTRL (330 aa)). Positions 1212 to 1445 (ITVKDLTAKY…KSLFQQAISP (234 aa)) constitute an ABC transporter 2 domain. ATP-binding positions include Tyr-1221 and 1246–1253 (GRTGSGKS). Residues 1388–1482 (RALKQAFADC…AEEEVQDTRL (95 aa)) are interaction with GORASP2. Cys-1397 carries the S-palmitoyl cysteine lipid modification. Residues Ser-1446 and Ser-1458 each carry the phosphoserine modification. The disordered stretch occupies residues 1454–1482 (QRSSSKHRSRAQITALKEEAEEEVQDTRL). A compositionally biased stretch (acidic residues) spans 1472 to 1482 (EAEEEVQDTRL). A PDZ-binding motif is present at residues 1480–1482 (TRL).

This sequence belongs to the ABC transporter superfamily. ABCC family. CFTR transporter (TC 3.A.1.202) subfamily. In terms of assembly, monomer; does not require oligomerization for channel activity. May form oligomers in the membrane. Interacts with SLC26A3, SLC26A6 and NHERF1. Interacts with SHANK2. Interacts with MYO6. Interacts (via C-terminus) with GOPC (via PDZ domain); this promotes CFTR internalization and thereby decreases channel activity. Interacts with SLC4A7 through NHERF1. Found in a complex with MYO5B and RAB11A. Interacts with ANO1. Interacts with SLC26A8. Interacts with AHCYL1; the interaction increases CFTR activity. Interacts with CSE1L. The core-glycosylated form interacts with GORASP2 (via PDZ GRASP-type 1 domain) in respone to ER stress. Interacts with MARCHF2; the interaction leads to CFTR ubiqtuitination and degradation. Interacts with ADGRG2. Post-translationally, N-glycosylated. Phosphorylated; cAMP treatment promotes phosphorylation and activates the channel. Dephosphorylation decreases the ATPase activity (in vitro). Phosphorylation at PKA sites activates the channel. Phosphorylation at PKC sites enhances the response to phosphorylation by PKA. Phosphorylated by AMPK; this inhibits channel activity. In terms of processing, ubiquitinated, leading to its degradation in the lysosome. Deubiquitination by USP10 in early endosomes enhances its endocytic recycling to the cell membrane. Ubiquitinated by RNF185 during ER stress. Ubiquitinated by MARCHF2.

The protein resides in the apical cell membrane. Its subcellular location is the early endosome membrane. It localises to the cell membrane. The protein localises to the recycling endosome membrane. It is found in the endoplasmic reticulum membrane. The protein resides in the nucleus. The catalysed reaction is ATP + H2O + closed Cl(-) channel = ADP + phosphate + open Cl(-) channel.. The enzyme catalyses chloride(in) = chloride(out). It carries out the reaction hydrogencarbonate(in) = hydrogencarbonate(out). It catalyses the reaction ATP + H2O = ADP + phosphate + H(+). In terms of biological role, epithelial ion channel that plays an important role in the regulation of epithelial ion and water transport and fluid homeostasis. Mediates the transport of chloride ions across the cell membrane. Possesses an intrinsic ATPase activity and utilizes ATP to gate its channel; the passive flow of anions through the channel is gated by cycles of ATP binding and hydrolysis by the ATP-binding domains. The ion channel is also permeable to HCO(3)(-); selectivity depends on the extracellular chloride concentration. Exerts its function also by modulating the activity of other ion channels and transporters. Contributes to the regulation of the pH and the ion content of the epithelial fluid layer. Modulates the activity of the epithelial sodium channel (ENaC) complex, in part by regulating the cell surface expression of the ENaC complex. May regulate bicarbonate secretion and salvage in epithelial cells by regulating the transporter SLC4A7. Can inhibit the chloride channel activity of ANO1. Plays a role in the chloride and bicarbonate homeostasis during sperm epididymal maturation and capacitation. The sequence is that of Cystic fibrosis transmembrane conductance regulator from Rhinolophus ferrumequinum (Greater horseshoe bat).